Consider the following 450-residue polypeptide: Succinate-semialdehyde dehydrogenase (450 aa).

Residue 119-120 coordinates NADP(+); sequence WN. R128 contacts substrate. Residues 143–146 and 197–198 contribute to the NADP(+) site; these read KPAK and GS. E219 functions as the Proton acceptor in the catalytic mechanism. L220 lines the NADP(+) pocket. 2 residues coordinate substrate: R247 and C253. Residue C253 is the Nucleophile of the active site. Residue E350 coordinates NADP(+). S410 contacts substrate.

The protein belongs to the aldehyde dehydrogenase family. Homodimer.

It carries out the reaction succinate semialdehyde + NAD(+) + H2O = succinate + NADH + 2 H(+). The enzyme catalyses succinate semialdehyde + NADP(+) + H2O = succinate + NADPH + 2 H(+). It participates in alkaloid degradation; nicotine degradation. In terms of biological role, catalyzes the NAD(P)(+)-dependent oxidation of succinate semialdehyde to succinate, which may enter the citric acid cycle. Is involved in the catabolism of 4-methylaminobutanoate produced from nicotine. Acts preferentially with NADP(+) as cosubstrate but can also use NAD(+). To a lesser extent, is active also towards butyraldehyde (8.5% of the activity observed with succinate semialdehyde) and propionaldehyde (1.6% of the activity observed with succinate semialdehyde) as substrates. This is Succinate-semialdehyde dehydrogenase (sad) from Paenarthrobacter nicotinovorans (Arthrobacter nicotinovorans).